A 396-amino-acid chain; its full sequence is Probable sugar efflux transporter (396 aa).

Residues 1–14 are Cytoplasmic-facing; it reads MTTNTVSRKVAWLR. The chain crosses the membrane as a helical span at residues 15–35; that stretch reads VVTLAVAAFIFNTTEFVPVGL. Residues 36–49 are Periplasmic-facing; the sequence is LSDIAQSFHMQTAQ. A helical membrane pass occupies residues 50-70; the sequence is VGIMLTIYAWVVALMSLPFML. At 71–80 the chain is on the cytoplasmic side; it reads MTSQVERRKL. The chain crosses the membrane as a helical span at residues 81–101; that stretch reads LICLFVVFIASHVLSFLSWSF. T102 is a topological domain (periplasmic). A helical membrane pass occupies residues 103-123; sequence VLVISRIGVAFAHAIFWSITA. The Cytoplasmic portion of the chain corresponds to 124–135; it reads SLAIRMAPAGKR. Residues 136 to 156 form a helical membrane-spanning segment; sequence AQALSLIATGTALAMVLGLPL. Over 157-169 the chain is Periplasmic; sequence GRIVGQYFGWRMT. The chain crosses the membrane as a helical span at residues 170–190; that stretch reads FFAIGIGALITLLCLIKLLPL. Residues 191–208 lie on the Cytoplasmic side of the membrane; sequence LPSEHSGSLKSLPLLFRR. A helical transmembrane segment spans residues 209 to 229; it reads PALMSIYLLTVVVVTAHYTAY. Over 230-245 the chain is Periplasmic; the sequence is SYIEPFVQNIAGFSAN. A helical membrane pass occupies residues 246–266; that stretch reads FATALLLLLGGAGIIGSVIFG. Over 267–274 the chain is Cytoplasmic; the sequence is KLGNQYAS. A helical membrane pass occupies residues 275–295; that stretch reads ALVSTAIALLLVCLALLLPAA. The Periplasmic portion of the chain corresponds to 296–298; that stretch reads NSE. The chain crosses the membrane as a helical span at residues 299 to 319; that stretch reads IHLGVLSIFWGIAMMIIGLGM. Over 320 to 332 the chain is Cytoplasmic; that stretch reads QVKVLALAPDATD. A helical transmembrane segment spans residues 333–353; that stretch reads VAMALFSGIFNIGIGAGALVG. Residues 354–363 are Periplasmic-facing; the sequence is NQVSLHWSMS. A helical transmembrane segment spans residues 364–384; the sequence is MIGYVGTVPAFAALIWSIIIF. The Cytoplasmic portion of the chain corresponds to 385 to 396; the sequence is RRWPVTLEEQTQ.

Belongs to the major facilitator superfamily. SotB (TC 2.A.1.2) family.

Its subcellular location is the cell inner membrane. In terms of biological role, involved in the efflux of sugars. The physiological role may be the reduction of the intracellular concentration of toxic sugars or sugar metabolites. This Escherichia coli O157:H7 protein is Probable sugar efflux transporter.